Reading from the N-terminus, the 215-residue chain is NADH-quinone oxidoreductase subunit C (215 aa).

It belongs to the complex I 30 kDa subunit family. In terms of assembly, NDH-1 is composed of 14 different subunits. Subunits NuoB, C, D, E, F, and G constitute the peripheral sector of the complex.

It localises to the cell inner membrane. It carries out the reaction a quinone + NADH + 5 H(+)(in) = a quinol + NAD(+) + 4 H(+)(out). NDH-1 shuttles electrons from NADH, via FMN and iron-sulfur (Fe-S) centers, to quinones in the respiratory chain. The immediate electron acceptor for the enzyme in this species is believed to be ubiquinone. Couples the redox reaction to proton translocation (for every two electrons transferred, four hydrogen ions are translocated across the cytoplasmic membrane), and thus conserves the redox energy in a proton gradient. The sequence is that of NADH-quinone oxidoreductase subunit C from Francisella philomiragia subsp. philomiragia (strain ATCC 25017 / CCUG 19701 / FSC 153 / O#319-036).